The chain runs to 180 residues: Large ribosomal subunit protein uL5 (180 aa).

It belongs to the universal ribosomal protein uL5 family. Part of the 50S ribosomal subunit; part of the 5S rRNA/L5/L18/L25 subcomplex. Contacts the 5S rRNA and the P site tRNA. Forms a bridge to the 30S subunit in the 70S ribosome.

In terms of biological role, this is one of the proteins that bind and probably mediate the attachment of the 5S RNA into the large ribosomal subunit, where it forms part of the central protuberance. In the 70S ribosome it contacts protein S13 of the 30S subunit (bridge B1b), connecting the 2 subunits; this bridge is implicated in subunit movement. Contacts the P site tRNA; the 5S rRNA and some of its associated proteins might help stabilize positioning of ribosome-bound tRNAs. The chain is Large ribosomal subunit protein uL5 from Chloroflexus aggregans (strain MD-66 / DSM 9485).